The chain runs to 458 residues: Glutamate--tRNA ligase 2 (458 aa).

Positions 20-30 (PSPTGLIHVGN) match the 'HIGH' region motif. The 'KMSKS' region signature appears at 251–255 (GLSKR). K254 provides a ligand contact to ATP.

Belongs to the class-I aminoacyl-tRNA synthetase family. Glutamate--tRNA ligase type 1 subfamily. Monomer.

It is found in the cytoplasm. It catalyses the reaction tRNA(Glu) + L-glutamate + ATP = L-glutamyl-tRNA(Glu) + AMP + diphosphate. Its function is as follows. Catalyzes the attachment of glutamate to tRNA(Glu) in a two-step reaction: glutamate is first activated by ATP to form Glu-AMP and then transferred to the acceptor end of tRNA(Glu). The polypeptide is Glutamate--tRNA ligase 2 (Xanthobacter autotrophicus (strain ATCC BAA-1158 / Py2)).